Here is a 310-residue protein sequence, read N- to C-terminus: MKQHILWDLNNYINQDYTLPKINCTFDIKTNINSSVKEDQEKWILEFFGNSIEKSKKYLGQQTFLIYMFSFPFASPDELKCIFKIMDWAFIIDDFYFESKAKGMSYLEKLFKTNKDKSKDKFIKLFWEIINEYKQIGKKDSIDVLINEIYSWAKSAVQCSKNDQISSNSTLAEYMESRYYDIGIIMALASSTTLISIPKEIRESKIFKQLEYWFVVCNTLINDCYSFNKEKNEPVLTNYVKIKTLQCGSIQTSLDFVAETIENSLTEINNHSNQLIQQYPNNINLKQYIKSLKYLTSGHLHVSSICNRYK.

The DDxx(x)D/E motif signature appears at Asp-93–Glu-98. The NDxxSxxxD/E motif signature appears at Asn-222 to Glu-230.

Belongs to the terpene synthase family.

The enzyme catalyses (2E,6E)-farnesyl diphosphate = (E)-beta-farnesene + diphosphate. The catalysed reaction is (2E,6E)-farnesyl diphosphate = (1S,2S,4R)-beta-elemene + diphosphate. It carries out the reaction (2E,6E)-farnesyl diphosphate = (3E,6E)-alpha-farnesene + diphosphate. Terpene synthase that converts its substrate farnesyl diphosphate (FPP) into the sesquiterpenes beta-elemene, (E)-beta-farnesene and (E,E)-alpha-farnesene. This Dictyostelium purpureum (Slime mold) protein is Terpene synthase 6.